The chain runs to 150 residues: Large ribosomal subunit protein uL13 (150 aa).

Residues 128–150 (GSDHPHSAQEPKILSLNSESVTK) form a disordered region.

Belongs to the universal ribosomal protein uL13 family. Part of the 50S ribosomal subunit.

In terms of biological role, this protein is one of the early assembly proteins of the 50S ribosomal subunit, although it is not seen to bind rRNA by itself. It is important during the early stages of 50S assembly. This is Large ribosomal subunit protein uL13 from Prochlorococcus marinus (strain NATL1A).